The sequence spans 202 residues: T-cell surface glycoprotein CD3 epsilon chain (202 aa).

Residues 1–21 (MQSRNLWRILGLCLLSVGAWG) form the signal peptide. Topologically, residues 22-122 (QDEDFKASDD…VCANCIEVNL (101 aa)) are extracellular. In terms of domain architecture, Ig-like spans 37–107 (PEKRFKVSIS…ADSIKEKSYL (71 aa)). Cysteine 54 and cysteine 96 form a disulfide bridge. A helical membrane pass occupies residues 123–143 (MAVVTIIVADICLTLGLLLMV). At 144–202 (YYWSKTRKANAKPVMRGTGAGSRPRGQNKEKPPPVPNPDYEPIRKGQQDLYSGLNQRGI) the chain is on the cytoplasmic side. The tract at residues 156-202 (PVMRGTGAGSRPRGQNKEKPPPVPNPDYEPIRKGQQDLYSGLNQRGI) is disordered. The NUMB-binding region stretch occupies residues 170 to 187 (QNKEKPPPVPNPDYEPIR). One can recognise an ITAM domain in the interval 173-200 (EKPPPVPNPDYEPIRKGQQDLYSGLNQR). Positions 174–181 (KPPPVPNP) are proline-rich sequence. Residues tyrosine 183 and tyrosine 194 each carry the phosphotyrosine modification. Over residues 192-202 (DLYSGLNQRGI) the composition is skewed to polar residues.

As to quaternary structure, the TCR-CD3 complex is composed of a CD3D/CD3E and a CD3G/CD3E heterodimers that preferentially associate with TCRalpha and TCRbeta, respectively, to form TCRalpha/CD3E/CD3G and TCRbeta/CD3G/CD3E trimers. In turn, the hexamer interacts with CD3Z homodimer to form the TCR-CD3 complex. Alternatively, TCRalpha and TCRbeta can be replaced by TCRgamma and TCRdelta. Interacts with CD6. Interacts (via Proline-rich sequence) with NCK1; the interaction is ligand dependent but independent of tyrosine kinase activation. In terms of processing, phosphorylated on Tyr residues after T-cell receptor triggering by LCK in association with CD4/CD8.

The protein resides in the cell membrane. Functionally, part of the TCR-CD3 complex present on T-lymphocyte cell surface that plays an essential role in adaptive immune response. When antigen presenting cells (APCs) activate T-cell receptor (TCR), TCR-mediated signals are transmitted across the cell membrane by the CD3 chains CD3D, CD3E, CD3G and CD3Z. All CD3 chains contain immunoreceptor tyrosine-based activation motifs (ITAMs) in their cytoplasmic domain. Upon TCR engagement, these motifs become phosphorylated by Src family protein tyrosine kinases LCK and FYN, resulting in the activation of downstream signaling pathways. In addition of this role of signal transduction in T-cell activation, CD3E plays an essential role in correct T-cell development. Also participates in internalization and cell surface down-regulation of TCR-CD3 complexes via endocytosis sequences present in CD3E cytosolic region. In addition to its role as a TCR coreceptor, it serves as a receptor for ITPRIPL1. Ligand recognition inhibits T-cell activation by promoting interaction with NCK1, which prevents CD3E-ZAP70 interaction and blocks the ERK-NFkB signaling cascade and calcium influx. This Canis lupus familiaris (Dog) protein is T-cell surface glycoprotein CD3 epsilon chain (CD3E).